Consider the following 772-residue polypeptide: Semaphorin-3A (772 aa).

Positions 1-20 are cleaved as a signal peptide; that stretch reads MGWFTGIACLFWGILLTARA. The Sema domain occupies 31-514; it reads RLKLSYKEML…STAGVAQLPL (484 aa). An N-linked (GlcNAc...) asparagine glycan is attached at Asn53. Cys103 and Cys114 are joined by a disulfide. Asn125 carries N-linked (GlcNAc...) asparagine glycosylation. Cystine bridges form between Cys132/Cys141, Cys269/Cys381, Cys293/Cys341, and Cys517/Cys535. The Ig-like C2-type domain maps to 577–665; sequence HGHSLEERII…GFMQTLLKVT (89 aa). Residue Asn591 is glycosylated (N-linked (GlcNAc...) asparagine). Residues Cys650 and Cys723 are joined by a disulfide bond. The span at 677-691 shows a compositional bias: basic and acidic residues; that stretch reads LLHKDDDGDGSKTKE. Disordered regions lie at residues 677 to 698 and 729 to 772; these read LLHK…SMTP and RDRK…PRSV. The span at 729–738 shows a compositional bias: basic residues; that stretch reads RDRKQRRQRP. Residues 750–772 are compositionally biased toward basic and acidic residues; the sequence is HMQESKKGRNRRTHEFERAPRSV.

This sequence belongs to the semaphorin family. Interacts with PLXND1. In terms of tissue distribution, expressed in the dorsal root ganglia.

The protein localises to the secreted. Functionally, may be involved in guiding growing axons towards their targets by forming a molecular boundary that instructs axons to engage in the formation of specific nerve tracts. Binds to neuropilin. Involved in the development of the olfactory system and in neuronal control of puberty. In Rattus norvegicus (Rat), this protein is Semaphorin-3A (Sema3a).